The primary structure comprises 533 residues: Glucose-6-phosphate isomerase (533 aa).

Residue Glu-341 is the Proton donor of the active site. Catalysis depends on residues His-372 and Lys-501.

Belongs to the GPI family.

It is found in the cytoplasm. The enzyme catalyses alpha-D-glucose 6-phosphate = beta-D-fructose 6-phosphate. The protein operates within carbohydrate biosynthesis; gluconeogenesis. It participates in carbohydrate degradation; glycolysis; D-glyceraldehyde 3-phosphate and glycerone phosphate from D-glucose: step 2/4. Catalyzes the reversible isomerization of glucose-6-phosphate to fructose-6-phosphate. The polypeptide is Glucose-6-phosphate isomerase (Cereibacter sphaeroides (strain ATCC 17025 / ATH 2.4.3) (Rhodobacter sphaeroides)).